The sequence spans 90 residues: DNA-binding protein HU-alpha (90 aa).

Belongs to the bacterial histone-like protein family. As to quaternary structure, heterodimer of an alpha and a beta chain.

Functionally, histone-like DNA-binding protein which is capable of wrapping DNA to stabilize it, and thus to prevent its denaturation under extreme environmental conditions. The sequence is that of DNA-binding protein HU-alpha (hupA) from Pseudomonas aeruginosa (strain ATCC 15692 / DSM 22644 / CIP 104116 / JCM 14847 / LMG 12228 / 1C / PRS 101 / PAO1).